The sequence spans 426 residues: Serine hydroxymethyltransferase (426 aa).

Residues Leu118 and 122-124 (GHL) contribute to the (6S)-5,6,7,8-tetrahydrofolate site. Lys227 carries the post-translational modification N6-(pyridoxal phosphate)lysine.

Belongs to the SHMT family. Homodimer. The cofactor is pyridoxal 5'-phosphate.

Its subcellular location is the cytoplasm. It carries out the reaction (6R)-5,10-methylene-5,6,7,8-tetrahydrofolate + glycine + H2O = (6S)-5,6,7,8-tetrahydrofolate + L-serine. It participates in one-carbon metabolism; tetrahydrofolate interconversion. Its pathway is amino-acid biosynthesis; glycine biosynthesis; glycine from L-serine: step 1/1. Catalyzes the reversible interconversion of serine and glycine with tetrahydrofolate (THF) serving as the one-carbon carrier. This reaction serves as the major source of one-carbon groups required for the biosynthesis of purines, thymidylate, methionine, and other important biomolecules. Also exhibits THF-independent aldolase activity toward beta-hydroxyamino acids, producing glycine and aldehydes, via a retro-aldol mechanism. The chain is Serine hydroxymethyltransferase from Mycobacterium leprae (strain Br4923).